The sequence spans 105 residues: Membrane-stabilizing protein A (105 aa).

Residues 1–21 (MQFYLILLAILYLIVSFISIF) traverse the membrane as a helical segment. At 22 to 29 (KMEVVFTR) the chain is on the cytoplasmic side. A helical transmembrane segment spans residues 30–50 (ILRIIMGVLLLFVLALTTMSF). Over 51–55 (PKENW) the chain is Extracellular. The helical transmembrane segment at 56–76 (WVFIVLLLLVGNVEVTGFKML) threads the bilayer. Residues 77–84 (KKDLKGVN) are Cytoplasmic-facing. Residues 85-105 (ILNLMSLFIFVIYFILTIVLF) traverse the membrane as a helical segment.

Belongs to the MspA family.

The protein resides in the membrane. Functionally, plays a role in toxin production, resistance to host innate immune mechanisms, and iron homeostasis. The polypeptide is Membrane-stabilizing protein A (Staphylococcus aureus (strain NCTC 8325 / PS 47)).